The chain runs to 209 residues: Octanoyltransferase (209 aa).

One can recognise a BPL/LPL catalytic domain in the interval 28–203 (NATPETLLLL…RFQGLLDEWL (176 aa)). Substrate is bound by residues 66 to 73 (RGGDVTFH), 133 to 135 (AIG), and 146 to 148 (GFA). Cys-164 functions as the Acyl-thioester intermediate in the catalytic mechanism.

It belongs to the LipB family.

Its subcellular location is the cytoplasm. It carries out the reaction octanoyl-[ACP] + L-lysyl-[protein] = N(6)-octanoyl-L-lysyl-[protein] + holo-[ACP] + H(+). It participates in protein modification; protein lipoylation via endogenous pathway; protein N(6)-(lipoyl)lysine from octanoyl-[acyl-carrier-protein]: step 1/2. Functionally, catalyzes the transfer of endogenously produced octanoic acid from octanoyl-acyl-carrier-protein onto the lipoyl domains of lipoate-dependent enzymes. Lipoyl-ACP can also act as a substrate although octanoyl-ACP is likely to be the physiological substrate. This is Octanoyltransferase from Pelobacter propionicus (strain DSM 2379 / NBRC 103807 / OttBd1).